Consider the following 1603-residue polypeptide: Protein TIC 214 (1603 aa).

The next 6 helical transmembrane spans lie at 11–31, 58–78, 86–106, 131–151, 167–187, and 213–233; these read VLWASILSWINISSPLILFGL, LSGTVAVSGLILGQLIIFLSI, LLLKPHTVTLLVLPYLLFYWY, IFFDSFIFQLLNPVLLPSPIL, LFVLSCFFGWLSGHLFFFNCI, and FSIFVLACILLYLGRAPVPFF.

It belongs to the TIC214 family. In terms of assembly, part of the Tic complex.

The protein resides in the plastid. Its subcellular location is the chloroplast inner membrane. Involved in protein precursor import into chloroplasts. May be part of an intermediate translocation complex acting as a protein-conducting channel at the inner envelope. The polypeptide is Protein TIC 214 (Physcomitrium patens (Spreading-leaved earth moss)).